We begin with the raw amino-acid sequence, 964 residues long: Syndetin (964 aa).

M1 carries the N-acetylmethionine modification. The tract at residues 1-25 is disordered; it reads MQKIKSLMTRQGLKSPPESLNDLGA. Residue S15 is modified to Phosphoserine. 2 coiled-coil regions span residues 81–107 and 216–244; these read LNLQ…VADL and YSCI…LSKI. Phosphoserine is present on residues S494, S498, S559, and S561. Residues 532–563 are disordered; that stretch reads DEETEDVLASNGYESDEQEKSAYQDYDSDSDV. A Glycyl lysine isopeptide (Lys-Gly) (interchain with G-Cter in SUMO1); alternate cross-link involves residue K963. Residue K963 forms a Glycyl lysine isopeptide (Lys-Gly) (interchain with G-Cter in SUMO2); alternate linkage.

Belongs to the syndetin family. As to quaternary structure, component of the endosome-associated retrograde protein (EARP) complex, composed of VPS51, VPS52, VPS53 and VPS50/Syndetin. The EARP complex interacts with EIPR1. Interacts with VPS51 and VPS53 in an EIPR1-independent manner.

It is found in the recycling endosome. The protein localises to the membrane. In terms of biological role, acts as a component of the EARP complex that is involved in endocytic recycling. The EARP complex associates with Rab4-positive endosomes and promotes recycling of internalized transferrin receptor (TFRC) to the plasma membrane. Within the EARP complex, required to tether the complex to recycling endosomes. Not involved in retrograde transport from early and late endosomes to the trans-Golgi network (TGN). This is Syndetin from Mus musculus (Mouse).